The following is a 265-amino-acid chain: Histidine racemase (265 aa).

Catalysis depends on Cys-67, which acts as the Proton acceptor. Cys-209 acts as the Proton donor in catalysis.

It belongs to the histidine racemase family. As to quaternary structure, homodimer.

The catalysed reaction is L-histidine = D-histidine. With respect to regulation, activity is not affected by buffer composition (PO(4) or Tris), ions (SO(4)(2-), Mg(2+) and EDTA) or the PLP inhibitor hydroxylamine. However, the activity is hindered by iodoacetamide and Hg(2+), which are known inhibitors of enzymes with catalytic thiols. Cofactor-independent isomerase that catalyzes the reversible conversion of L-histidine to D-histidine. Shows weak activity with L,L-lanthionine. The catalytic turnover is 10'000-fold faster with L-histidine than with L,L-lanthionine. May play a role in growth of F.nucleatum. This chain is Histidine racemase, found in Fusobacterium nucleatum subsp. nucleatum (strain ATCC 25586 / DSM 15643 / BCRC 10681 / CIP 101130 / JCM 8532 / KCTC 2640 / LMG 13131 / VPI 4355).